Here is a 588-residue protein sequence, read N- to C-terminus: 2-isopropylmalate synthase (588 aa).

A Pyruvate carboxyltransferase domain is found at 40-314; it reads PRWCAVDLRD…DPQIDFSDLD (275 aa). Residues Asp49, His253, His255, and Asn289 each contribute to the Mg(2+) site. Positions 456 to 588 are regulatory domain; sequence APLDRVEEKW…TVREPELAAV (133 aa).

The protein belongs to the alpha-IPM synthase/homocitrate synthase family. LeuA type 2 subfamily. In terms of assembly, homodimer. Mg(2+) serves as cofactor.

The protein localises to the cytoplasm. The catalysed reaction is 3-methyl-2-oxobutanoate + acetyl-CoA + H2O = (2S)-2-isopropylmalate + CoA + H(+). It participates in amino-acid biosynthesis; L-leucine biosynthesis; L-leucine from 3-methyl-2-oxobutanoate: step 1/4. Its function is as follows. Catalyzes the condensation of the acetyl group of acetyl-CoA with 3-methyl-2-oxobutanoate (2-ketoisovalerate) to form 3-carboxy-3-hydroxy-4-methylpentanoate (2-isopropylmalate). This is 2-isopropylmalate synthase from Clavibacter michiganensis subsp. michiganensis (strain NCPPB 382).